A 405-amino-acid chain; its full sequence is L-rhamnonate dehydratase (405 aa).

Positions 33 and 59 each coordinate substrate. Residues Asp226, Glu252, and Glu280 each contribute to the Mg(2+) site. Catalysis depends on His329, which acts as the Proton acceptor. Position 349 (Glu349) interacts with substrate.

The protein belongs to the mandelate racemase/muconate lactonizing enzyme family. RhamD subfamily. Homooctamer; tetramer of dimers. Mg(2+) is required as a cofactor.

The enzyme catalyses L-rhamnonate = 2-dehydro-3-deoxy-L-rhamnonate + H2O. Functionally, catalyzes the dehydration of L-rhamnonate to 2-keto-3-deoxy-L-rhamnonate (KDR). The chain is L-rhamnonate dehydratase from Escherichia coli O45:K1 (strain S88 / ExPEC).